Reading from the N-terminus, the 490-residue chain is ATP synthase subunit beta, chloroplastic (490 aa).

169-176 (GGAGVGKT) is an ATP binding site.

This sequence belongs to the ATPase alpha/beta chains family. F-type ATPases have 2 components, CF(1) - the catalytic core - and CF(0) - the membrane proton channel. CF(1) has five subunits: alpha(3), beta(3), gamma(1), delta(1), epsilon(1). CF(0) has four main subunits: a(1), b(1), b'(1) and c(9-12).

It localises to the plastid. Its subcellular location is the chloroplast thylakoid membrane. The enzyme catalyses ATP + H2O + 4 H(+)(in) = ADP + phosphate + 5 H(+)(out). Functionally, produces ATP from ADP in the presence of a proton gradient across the membrane. The catalytic sites are hosted primarily by the beta subunits. The chain is ATP synthase subunit beta, chloroplastic from Cyanidium caldarium (Red alga).